We begin with the raw amino-acid sequence, 159 residues long: Large ribosomal subunit protein mL50 (159 aa).

It belongs to the mitochondrion-specific ribosomal protein mL50 family. As to quaternary structure, component of the mitochondrial ribosome large subunit (39S) which comprises a 16S rRNA and about 50 distinct proteins.

The protein localises to the mitochondrion. This is Large ribosomal subunit protein mL50 (MRPL50) from Bos taurus (Bovine).